Reading from the N-terminus, the 333-residue chain is Prenyltransferase stbC (333 aa).

The next 8 helical transmembrane spans lie at 74-94 (VAFQAVLYIGWTFFMRGAGCA), 125-145 (ANIFGFAMVALAFACISPLPA), 147-164 (CQRLGLMTTVLSIIYPFC), 173-193 (VILGMTLAINFILAAYGAGLP), 201-221 (VPTICVTTAITLLVVFYDVVY), 247-267 (ILLTSITLVIAGLIATTGVLV), 272-292 (YFFVFSVAGLLAALLAMIGGI), and 304-324 (SGWFYALAIFNLLGGYLIEYL).

Belongs to the UbiA prenyltransferase family.

It localises to the membrane. It catalyses the reaction orsellinate + (2E,6E)-farnesyl diphosphate = ilicicolinate B + diphosphate. It participates in secondary metabolite biosynthesis; terpenoid biosynthesis. Prenyltransferase; part of the cluster that mediates the biosynthesis of LL-Z1272-beta, also known as ilicicolin B, a prenylated aryl-aldehyde produced by several fungi and that serves as a key pathway intermediate for many fungal meroterpenoids. The first step in the pathway is performed by the non-reducing polyketide synthase stbA that produces orsellinic acid by condensing acetyl-CoA with 3 malonyl-CoA units. The prenyltransferase stbC then prenylates orsenilic acid into grifolic acid. Finally, grifolic acid is reduced to ilicicolin B by the NRPS-like protein stbB. In Stachybotrys bisbyi (Hyalostachybotrys bisbyi), this protein is Prenyltransferase stbC.